A 337-amino-acid polypeptide reads, in one-letter code: Inositol 2-dehydrogenase (337 aa).

Belongs to the Gfo/Idh/MocA family. Homotetramer.

The catalysed reaction is myo-inositol + NAD(+) = scyllo-inosose + NADH + H(+). In terms of biological role, involved in the oxidation of myo-inositol (MI) to 2-keto-myo-inositol (2KMI or 2-inosose). The protein is Inositol 2-dehydrogenase of Burkholderia cenocepacia (strain HI2424).